A 597-amino-acid chain; its full sequence is Translation initiation factor IF-2 (597 aa).

Low complexity-rich tracts occupy residues 57 to 73 (GGDA…AATA) and 81 to 95 (TPAA…PASD). Residues 57 to 96 (GGDAAPAAASAPAAATAEPEEADETPAAAAQADAEPASDL) are disordered. The region spanning 98-271 (HRAPVVTIMG…ELEDLRADPK (174 aa)) is the tr-type G domain. Residues 107–114 (GHVDHGKT) are G1. Position 107–114 (107–114 (GHVDHGKT)) interacts with GTP. The segment at 132 to 136 (GITQH) is G2. Residues 153–156 (DTPG) form a G3 region. Residues 153-157 (DTPGH) and 207-210 (NKVD) contribute to the GTP site. Residues 207–210 (NKVD) are G4. The tract at residues 243–245 (SAK) is G5.

It belongs to the TRAFAC class translation factor GTPase superfamily. Classic translation factor GTPase family. IF-2 subfamily.

Its subcellular location is the cytoplasm. Functionally, one of the essential components for the initiation of protein synthesis. Protects formylmethionyl-tRNA from spontaneous hydrolysis and promotes its binding to the 30S ribosomal subunits. Also involved in the hydrolysis of GTP during the formation of the 70S ribosomal complex. This Deinococcus radiodurans (strain ATCC 13939 / DSM 20539 / JCM 16871 / CCUG 27074 / LMG 4051 / NBRC 15346 / NCIMB 9279 / VKM B-1422 / R1) protein is Translation initiation factor IF-2.